Here is a 185-residue protein sequence, read N- to C-terminus: ATP synthase subunit b, chloroplastic (185 aa).

Residues 31 to 53 traverse the membrane as a helical segment; it reads IINITVVLGILIYFGKGVLSNLL.

The protein belongs to the ATPase B chain family. As to quaternary structure, F-type ATPases have 2 components, F(1) - the catalytic core - and F(0) - the membrane proton channel. F(1) has five subunits: alpha(3), beta(3), gamma(1), delta(1), epsilon(1). F(0) has four main subunits: a(1), b(1), b'(1) and c(10-14). The alpha and beta chains form an alternating ring which encloses part of the gamma chain. F(1) is attached to F(0) by a central stalk formed by the gamma and epsilon chains, while a peripheral stalk is formed by the delta, b and b' chains.

It is found in the plastid. It localises to the chloroplast thylakoid membrane. F(1)F(0) ATP synthase produces ATP from ADP in the presence of a proton or sodium gradient. F-type ATPases consist of two structural domains, F(1) containing the extramembraneous catalytic core and F(0) containing the membrane proton channel, linked together by a central stalk and a peripheral stalk. During catalysis, ATP synthesis in the catalytic domain of F(1) is coupled via a rotary mechanism of the central stalk subunits to proton translocation. Its function is as follows. Component of the F(0) channel, it forms part of the peripheral stalk, linking F(1) to F(0). The polypeptide is ATP synthase subunit b, chloroplastic (Gnetum parvifolium (Small-leaved jointfir)).